Here is a 250-residue protein sequence, read N- to C-terminus: 1-(5-phosphoribosyl)-5-[(5-phosphoribosylamino)methylideneamino] imidazole-4-carboxamide isomerase (250 aa).

D8 serves as the catalytic Proton acceptor. The Proton donor role is filled by D129.

This sequence belongs to the HisA/HisF family.

It is found in the cytoplasm. It catalyses the reaction 1-(5-phospho-beta-D-ribosyl)-5-[(5-phospho-beta-D-ribosylamino)methylideneamino]imidazole-4-carboxamide = 5-[(5-phospho-1-deoxy-D-ribulos-1-ylimino)methylamino]-1-(5-phospho-beta-D-ribosyl)imidazole-4-carboxamide. The protein operates within amino-acid biosynthesis; L-histidine biosynthesis; L-histidine from 5-phospho-alpha-D-ribose 1-diphosphate: step 4/9. This chain is 1-(5-phosphoribosyl)-5-[(5-phosphoribosylamino)methylideneamino] imidazole-4-carboxamide isomerase, found in Desulfatibacillum aliphaticivorans.